The following is a 106-amino-acid chain: Biogenesis of lysosome-related organelles complex 1 subunit BLS1 (106 aa).

Belongs to the BLOC1S1 family. As to quaternary structure, component of the biogenesis of lysosome-related organelles complex-1 (BLOC-1).

The protein localises to the endosome. Component of the biogenesis of lysosome-related organelles complex-1 (BLOC-1), a complex involved in endosomal cargo sorting. The polypeptide is Biogenesis of lysosome-related organelles complex 1 subunit BLS1 (BLS1) (Candida glabrata (strain ATCC 2001 / BCRC 20586 / JCM 3761 / NBRC 0622 / NRRL Y-65 / CBS 138) (Yeast)).